A 352-amino-acid polypeptide reads, in one-letter code: Histidine biosynthesis bifunctional protein HisB (352 aa).

The interval 1–164 (MSQKILFIDR…EIENEILSSF (164 aa)) is histidinol-phosphatase. The active-site Nucleophile is the Asp9. Mg(2+)-binding residues include Asp9 and Asp11. The active-site Proton donor is the Asp11. 4 residues coordinate Zn(2+): Cys93, His95, Cys101, and Cys103. Asp130 provides a ligand contact to Mg(2+). The segment at 165-352 (RSASYQRTTK…ENLASSKGVI (188 aa)) is imidazoleglycerol-phosphate dehydratase.

It in the N-terminal section; belongs to the histidinol-phosphatase family. The protein in the C-terminal section; belongs to the imidazoleglycerol-phosphate dehydratase family. It depends on Mg(2+) as a cofactor. Requires Zn(2+) as cofactor.

The protein resides in the cytoplasm. It catalyses the reaction D-erythro-1-(imidazol-4-yl)glycerol 3-phosphate = 3-(imidazol-4-yl)-2-oxopropyl phosphate + H2O. The catalysed reaction is L-histidinol phosphate + H2O = L-histidinol + phosphate. Its pathway is amino-acid biosynthesis; L-histidine biosynthesis; L-histidine from 5-phospho-alpha-D-ribose 1-diphosphate: step 6/9. It participates in amino-acid biosynthesis; L-histidine biosynthesis; L-histidine from 5-phospho-alpha-D-ribose 1-diphosphate: step 8/9. The chain is Histidine biosynthesis bifunctional protein HisB from Campylobacter jejuni subsp. doylei (strain ATCC BAA-1458 / RM4099 / 269.97).